The chain runs to 368 residues: DNA replication and repair protein RecF (368 aa).

30 to 37 serves as a coordination point for ATP; the sequence is GNNAQGKT.

Belongs to the RecF family.

Its subcellular location is the cytoplasm. Functionally, the RecF protein is involved in DNA metabolism; it is required for DNA replication and normal SOS inducibility. RecF binds preferentially to single-stranded, linear DNA. It also seems to bind ATP. The chain is DNA replication and repair protein RecF from Streptococcus pyogenes serotype M49 (strain NZ131).